A 220-amino-acid chain; its full sequence is Histone deacetylase complex subunit SAP30 (220 aa).

The interval Met1–Lys129 is interaction with NCOR1. At Thr5 the chain carries Phosphothreonine. Residues Cys67–His115 form an Atypical zinc finger. A Glycyl lysine isopeptide (Lys-Gly) (interchain with G-Cter in SUMO2) cross-link involves residue Lys87. A disordered region spans residues Arg123–Ile143. The segment at Gly130–His220 is interaction with SIN3A. Ser131 and Ser138 each carry phosphoserine. Residue Thr145 is modified to Phosphothreonine. Glycyl lysine isopeptide (Lys-Gly) (interchain with G-Cter in SUMO2) cross-links involve residues Lys194, Lys205, and Lys214.

The protein belongs to the SAP30 family. Component of the histone deacetylase complex that includes at least SIN3A, HDAC1 and HDAC2. Found in a complex composed of at least SINHCAF, SIN3A, HDAC1, SAP30, RBBP4, OGT and TET1. Interacts with HDAC1. Interacts with SIN3A, SIN3B, HDAC2, RBBP4 and NCOR1. Interacts with SAMSN1. Interacts with HCFC1. Interacts with SAP30BP. Expressed in all tissues tested with highest levels in pancreas, ovary, PBL, spleen and thymus; lowest levels in brain, placenta, lung and kidney.

It localises to the nucleus. Involved in the functional recruitment of the Sin3-histone deacetylase complex (HDAC) to a specific subset of N-CoR corepressor complexes. Capable of transcription repression by N-CoR. Active in deacetylating core histone octamers (when in a complex) but inactive in deacetylating nucleosomal histones. Its function is as follows. (Microbial infection) Involved in transcriptional repression of HHV-1 genes TK and gC. The chain is Histone deacetylase complex subunit SAP30 from Homo sapiens (Human).